Consider the following 585-residue polypeptide: Protein FAM151A (585 aa).

The helical transmembrane segment at 14 to 34 (WVFAGITCVSVVVIAAIVLAI) threads the bilayer.

Belongs to the menorin family.

Its subcellular location is the membrane. The chain is Protein FAM151A (FAM151A) from Homo sapiens (Human).